Consider the following 502-residue polypeptide: Keratin-associated protein 16-1 (502 aa).

A run of 15 repeats spans residues 4 to 8 (CCCSR), 58 to 62 (CCQPS), 73 to 77 (CCEAT), 93 to 97 (CCEAT), 108 to 112 (CCQPV), 113 to 117 (CCEAT), 133 to 137 (CCEAT), 152 to 156 (CCETS), 177 to 181 (CCQPV), 187 to 191 (CCSAV), 212 to 216 (CCQPV), 222 to 226 (CCPSV), 272 to 276 (CCVQG), 292 to 296 (CCVSS), and 347 to 351 (CCRPG). The segment at 73 to 307 (CCEATICEPS…CQPVCPEPSP (235 aa)) is 15 X 5 AA repeats of C-C-X(3). Residues 435 to 502 (RQPCTDSDND…QPAASKPADR (68 aa)) form a disordered region. A compositionally biased stretch (low complexity) spans 489–502 (AAAPQPAASKPADR).

This sequence belongs to the KRTAP type 16 family. In terms of assembly, interacts with hair keratins.

Functionally, in the hair cortex, hair keratin intermediate filaments are embedded in an interfilamentous matrix, consisting of hair keratin-associated proteins (KRTAP), which are essential for the formation of a rigid and resistant hair shaft through their extensive disulfide bond cross-linking with abundant cysteine residues of hair keratins. The matrix proteins include the high-sulfur and high-glycine-tyrosine keratins. This Mus musculus (Mouse) protein is Keratin-associated protein 16-1 (Krtap16-1).